The chain runs to 229 residues: Large ribosomal subunit protein uL1 (229 aa).

This sequence belongs to the universal ribosomal protein uL1 family. In terms of assembly, part of the 50S ribosomal subunit.

Its function is as follows. Binds directly to 23S rRNA. The L1 stalk is quite mobile in the ribosome, and is involved in E site tRNA release. Protein L1 is also a translational repressor protein, it controls the translation of the L11 operon by binding to its mRNA. This is Large ribosomal subunit protein uL1 from Streptococcus pyogenes serotype M1.